The chain runs to 397 residues: Phosphoglycerate kinase (397 aa).

Residues 21–23 (DVN), R36, 59–62 (HFGR), R119, and R152 each bind substrate. ATP contacts are provided by residues K202, E324, and 354–357 (GGDT).

This sequence belongs to the phosphoglycerate kinase family. Monomer.

Its subcellular location is the cytoplasm. The catalysed reaction is (2R)-3-phosphoglycerate + ATP = (2R)-3-phospho-glyceroyl phosphate + ADP. It functions in the pathway carbohydrate degradation; glycolysis; pyruvate from D-glyceraldehyde 3-phosphate: step 2/5. This Cereibacter sphaeroides (strain ATCC 17025 / ATH 2.4.3) (Rhodobacter sphaeroides) protein is Phosphoglycerate kinase.